The sequence spans 320 residues: Glycerol-3-phosphate dehydrogenase [NAD(P)+] (320 aa).

Positions 11, 30, and 102 each coordinate NADPH. Sn-glycerol 3-phosphate is bound by residues Lys102, Gly130, and Ser132. Residue Ala134 participates in NADPH binding. Positions 185, 238, 248, 249, and 250 each coordinate sn-glycerol 3-phosphate. Lys185 functions as the Proton acceptor in the catalytic mechanism. NADPH is bound at residue Arg249. Position 270 (Glu270) interacts with NADPH.

It belongs to the NAD-dependent glycerol-3-phosphate dehydrogenase family.

It is found in the cytoplasm. It carries out the reaction sn-glycerol 3-phosphate + NAD(+) = dihydroxyacetone phosphate + NADH + H(+). The enzyme catalyses sn-glycerol 3-phosphate + NADP(+) = dihydroxyacetone phosphate + NADPH + H(+). Its pathway is membrane lipid metabolism; glycerophospholipid metabolism. In terms of biological role, catalyzes the reduction of the glycolytic intermediate dihydroxyacetone phosphate (DHAP) to sn-glycerol 3-phosphate (G3P), the key precursor for phospholipid synthesis. This is Glycerol-3-phosphate dehydrogenase [NAD(P)+] from Ruegeria sp. (strain TM1040) (Silicibacter sp.).